The primary structure comprises 229 residues: Small ribosomal subunit protein uS5 (229 aa).

The region spanning 61–124 is the S5 DRBM domain; the sequence is LEEQVLDVKL…AHAKLSLIKV (64 aa).

This sequence belongs to the universal ribosomal protein uS5 family. Part of the 30S ribosomal subunit. Contacts protein S4.

With S4 and S12 plays an important role in translational accuracy. The protein is Small ribosomal subunit protein uS5 of Methanococcus maripaludis (strain C6 / ATCC BAA-1332).